A 602-amino-acid polypeptide reads, in one-letter code: ATP-dependent DNA helicase XPD (602 aa).

Residues 1 to 247 form the Helicase ATP-binding domain; that stretch reads MQKSYGVALE…DLIEMIRSAL (247 aa). 11–18 provides a ligand contact to ATP; it reads SPTGSGKT. 4 residues coordinate [4Fe-4S] cluster: Cys-74, Cys-95, Cys-110, and Cys-146. Positions 193-196 match the DEAH box motif; sequence DEAH. The 182-residue stretch at 421–602 folds into the Helicase C-terminal domain; that stretch reads VIEDIILKVK…SAQAREKYGA (182 aa). SsDNA is bound by residues Trp-531 and Arg-566.

This sequence belongs to the helicase family. RAD3/XPD subfamily. In terms of assembly, monomer. [4Fe-4S] cluster serves as cofactor.

It catalyses the reaction Couples ATP hydrolysis with the unwinding of duplex DNA at the replication fork by translocating in the 5'-3' direction. This creates two antiparallel DNA single strands (ssDNA). The leading ssDNA polymer is the template for DNA polymerase III holoenzyme which synthesizes a continuous strand.. It carries out the reaction ATP + H2O = ADP + phosphate + H(+). ATP-dependent 5'-3' DNA helicase. Thought to be involved in nucleotide excision repair (NER) of DNA. The sequence is that of ATP-dependent DNA helicase XPD from Thermoplasma acidophilum (strain ATCC 25905 / DSM 1728 / JCM 9062 / NBRC 15155 / AMRC-C165).